Here is a 350-residue protein sequence, read N- to C-terminus: MSSQTVLVTGGAGYIGSHTVLQLLLGGFKAVVVDNLDNSSETAIHRVKELAGKFAGNLSFHKLDLRDRDALEKIFSSTKFDSVIHFAGLKAVGESVQKPLLYYDNNLIGTIVLFEVMAAHGCKKLVFSSSATVYGLPKEVPCTEEFPLSAANPYGRTKLIIEEICRDIYRAEQEWKIILLRYFNPVGAHPSGYIGEDPRGIPNNLMPFVQQVAVGRRPALTVFGNDYTTSDGTGVRDYIHVVDLADGHIAALRKLNDPKIGCEVYNLGTGKGTSVLEMVKAFEQASGKKIPLVMAGRRPGDAEVVYASTNKAERELNWKAKYGIDEMCRDQWNWASKNPYGYGGSEDSSN.

5–36 (TVLVTGGAGYIGSHTVLQLLLGGFKAVVVDNL) contacts NAD(+). Residue serine 130 coordinates substrate. Residue tyrosine 154 is the Proton acceptor of the active site.

It belongs to the NAD(P)-dependent epimerase/dehydratase family. It depends on NAD(+) as a cofactor.

It catalyses the reaction UDP-alpha-D-glucose = UDP-alpha-D-galactose. Its pathway is carbohydrate metabolism; galactose metabolism. This chain is UDP-glucose 4-epimerase GEPI48, found in Cyamopsis tetragonoloba (Guar).